We begin with the raw amino-acid sequence, 223 residues long: Glutathione S-transferase Z2 (223 aa).

The region spanning 10–91 (AKLKLYSYWR…YLDDKYPEPP (82 aa)) is the GST N-terminal domain. Residues 20-21 (SS), 20-25 (SSCAHR), Q49, 49-50 (QS), 62-63 (TV), V63, 75-76 (DS), Q115, and 119-121 (NMA) contribute to the glutathione site. Positions 96-221 (DYHKRAVNYQ…VPEKQPDTPS (126 aa)) constitute a GST C-terminal domain.

The protein belongs to the GST superfamily. Zeta family.

It is found in the cytoplasm. The protein resides in the cytosol. The catalysed reaction is RX + glutathione = an S-substituted glutathione + a halide anion + H(+). Functionally, may be involved in the conjugation of reduced glutathione to a wide number of exogenous and endogenous hydrophobic electrophiles and have a detoxification role against certain herbicides. This chain is Glutathione S-transferase Z2 (GSTZ2), found in Arabidopsis thaliana (Mouse-ear cress).